The chain runs to 326 residues: DNA repair protein XRCC4 (326 aa).

The interval M1 to R212 is interaction with IFFO1. A Phosphoserine; by PRKDC modification is found at S53. 2 coiled-coil regions span residues L131–C165 and N185–K209. The interaction with LIG4 stretch occupies residues F180 to E211. S193 carries the phosphoserine; by PRKDC modification. The tract at residues Q203 to D326 is disordered. Basic and acidic residues predominate over residues E206–L226. Position 227 is a phosphotyrosine (Y227). A Phosphoserine modification is found at S230. T231 is modified (phosphothreonine). S235 is subject to Phosphoserine. T244 carries the phosphothreonine modification. S250 carries the post-translational modification Phosphoserine. The residue at position 254 (S254) is a Phosphoserine; by PRKDC. The Nuclear localization signal motif lies at R264 to R269. Residue K290 forms a Glycyl lysine isopeptide (Lys-Gly) (interchain with G-Cter in ubiquitin) linkage. S295 carries the phosphoserine; by PRKDC modification. S296 is modified (phosphoserine). Phosphoserine; by PRKDC occurs at positions 307 and 312. Residues S307–D326 show a composition bias toward polar residues. A Phosphothreonine; by PRKDC modification is found at T315. Phosphoserine; by PRKDC is present on residues S319 and S320.

It belongs to the XRCC4-XLF family. XRCC4 subfamily. As to quaternary structure, homodimer and homotetramer in solution. Interacts with NHEJ1/XLF; the interaction is direct and is mediated via a head-to-head interaction between N-terminal head regions. Interacts with LIG4; the LIG4-XRCC4 subcomplex has a 1:2 stoichiometry and XRCC4 is required for LIG4 stability. Component of the core long-range non-homologous end joining (NHEJ) complex (also named DNA-PK complex) composed of PRKDC, LIG4, XRCC4, XRCC6/Ku70, XRCC5/Ku86 and NHEJ1/XLF. Additional component of the NHEJ complex includes PAXX. Following autophosphorylation, PRKDC dissociates from DNA, leading to formation of the short-range NHEJ complex, composed of LIG4, XRCC4, XRCC6/Ku70, XRCC5/Ku86 and NHEJ1/XLF. Interacts with PRKDC; the interaction is direct. Interacts with XRCC6/Ku70; the interaction is direct. Interacts with APTX and APLF. Forms a heterotetramer with IFFO1; the interaction involves LIG4-free XRCC4 and leads to the relocalization of IFFO1 to the sites of DNA damage. Interacts with PNKP; mainly interacts with PNKP when phosphorylated at Thr-231, but is also able to interact at much lower level with PNKP when not unphosphorylated. Interacts with POLL (DNA polymerase lambda). Interacts with XKR4; interacts with the processed form of XKR4, which is cleaved by caspase. In terms of processing, phosphorylated by PRKDC at the C-terminus in response to DNA damage; Ser-254 and Ser-312 constitute the main phosphorylation sites. Phosphorylation by PRKDC at the C-terminus of XRCC4 and NHEJ1/XLF are highly redundant and regulate ability of the XRCC4-NHEJ1/XLF subcomplex to bridge DNA. Phosphorylation by PRKDC does not prevent interaction with NHEJ1/XLF but disrupts ability to bridge DNA and promotes detachment from DNA. Phosphorylation at Ser-319 and Ser-320 by PRKDC promotes recognition by the SCF(FBXW7) complex and subsequent ubiquitination via 'Lys-63'-linked ubiquitin. Phosphorylation at Thr-231 by CK2 promotes interaction with PNKP; regulating PNKP activity and localization to DNA damage sites. Phosphorylation by CK2 promotes interaction with APTX. Post-translationally, ubiquitinated at Lys-290 by the SCF(FBXW7) complex via 'Lys-63'-linked ubiquitination, thereby promoting double-strand break repair: the SCF(FBXW7) complex specifically recognizes XRCC4 when phosphorylated at Ser-319 and Ser-320 by PRKDC, and 'Lys-63'-linked ubiquitination facilitates DNA non-homologous end joining (NHEJ) by enhancing association with XRCC5/Ku80 and XRCC6/Ku70. Monoubiquitinated. Undergoes proteolytic processing by caspase-3 (CASP3). This generates the protein XRCC4, C-terminus (XRCC4/C), which translocates to the cytoplasm and activates phospholipid scramblase activity of XKR4, thereby promoting phosphatidylserine exposure on apoptotic cell surface.

The protein resides in the nucleus. The protein localises to the chromosome. Its subcellular location is the cytoplasm. In terms of biological role, DNA non-homologous end joining (NHEJ) core factor, required for double-strand break repair and V(D)J recombination. Acts as a scaffold protein that regulates recruitment of other proteins to DNA double-strand breaks (DSBs). Associates with NHEJ1/XLF to form alternating helical filaments that bridge DNA and act like a bandage, holding together the broken DNA until it is repaired. The XRCC4-NHEJ1/XLF subcomplex binds to the DNA fragments of a DSB in a highly diffusive manner and robustly bridges two independent DNA molecules, holding the broken DNA fragments in close proximity to one other. The mobility of the bridges ensures that the ends remain accessible for further processing by other repair factors. Plays a key role in the NHEJ ligation step of the broken DNA during DSB repair via direct interaction with DNA ligase IV (LIG4): the LIG4-XRCC4 subcomplex reseals the DNA breaks after the gap filling is completed. XRCC4 stabilizes LIG4, regulates its subcellular localization and enhances LIG4's joining activity. Binding of the LIG4-XRCC4 subcomplex to DNA ends is dependent on the assembly of the DNA-dependent protein kinase complex DNA-PK to these DNA ends. Promotes displacement of PNKP from processed strand break termini. Acts as an activator of the phospholipid scramblase activity of XKR4. This form, which is generated upon caspase-3 (CASP3) cleavage, translocates into the cytoplasm and interacts with XKR4, thereby promoting phosphatidylserine scramblase activity of XKR4 and leading to phosphatidylserine exposure on apoptotic cell surface. This is DNA repair protein XRCC4 from Mus musculus (Mouse).